Reading from the N-terminus, the 375-residue chain is E3 ubiquitin-protein ligase IE2 (375 aa).

Residues 1 to 12 (MSRINNADTPTN) are compositionally biased toward polar residues. Disordered stretches follow at residues 1-61 (MSRI…VGDR) and 115-142 (LTTT…DYNS). An RING-type zinc finger spans residues 177-225 (CHICSCTFTDIKNYNSNFVTSSECNHAVCFKCYVSIVFNKEAYKCSICN). Positions 272-348 (KTIIEELQLE…TFLQNQLDAQ (77 aa)) form a coiled coil.

The protein belongs to the alphabaculovirus IE2 protein family. In terms of assembly, homooligomer. Post-translationally, auto-ubiquitinated.

The protein resides in the host nucleus. It carries out the reaction S-ubiquitinyl-[E2 ubiquitin-conjugating enzyme]-L-cysteine + [acceptor protein]-L-lysine = [E2 ubiquitin-conjugating enzyme]-L-cysteine + N(6)-ubiquitinyl-[acceptor protein]-L-lysine.. Its function is as follows. RING-finger E3 ubiquitin ligase that plays an important regulatory role during the initial stages of infection. Migrates to specific nuclear foci early in infection supposely to prepare the sites for viral replication by targeting and ubiquitinating host proteins. This chain is E3 ubiquitin-protein ligase IE2 (IE2), found in Hyphantria cunea nuclear polyhedrosis virus (HcNPV).